We begin with the raw amino-acid sequence, 220 residues long: Grancalcin (220 aa).

4 consecutive EF-hand domains span residues 51 to 86 (SPAD…SGIS), 92 to 127 (FSLE…LNAW), 122 to 157 (AALN…MGYR), and 158 to 193 (LSPQ…ALTD). D105, D107, T109, K111, E116, D135, D137, S139, T141, and E146 together coordinate Ca(2+).

Homodimer. Interacts with SRI and LCP1.

The protein resides in the cytoplasm. The protein localises to the cytoplasmic granule membrane. Its function is as follows. Calcium-binding protein that may play a role in the adhesion of neutrophils to fibronectin. May play a role in the formation of focal adhesions. The polypeptide is Grancalcin (Gca) (Mus musculus (Mouse)).